The sequence spans 122 residues: Large ribosomal subunit protein uL14 (122 aa).

Belongs to the universal ribosomal protein uL14 family. Part of the 50S ribosomal subunit. Forms a cluster with proteins L3 and L19. In the 70S ribosome, L14 and L19 interact and together make contacts with the 16S rRNA in bridges B5 and B8.

In terms of biological role, binds to 23S rRNA. Forms part of two intersubunit bridges in the 70S ribosome. This Caldanaerobacter subterraneus subsp. tengcongensis (strain DSM 15242 / JCM 11007 / NBRC 100824 / MB4) (Thermoanaerobacter tengcongensis) protein is Large ribosomal subunit protein uL14.